Here is a 21-residue protein sequence, read N- to C-terminus: Hemocyanin subunit 4 (21 aa).

Belongs to the tyrosinase family. Hemocyanin subfamily. In terms of tissue distribution, hemolymph.

It localises to the secreted. The protein localises to the extracellular space. Its function is as follows. Hemocyanins are copper-containing oxygen carriers occurring freely dissolved in the hemolymph of many mollusks and arthropods. The polypeptide is Hemocyanin subunit 4 (Maja squinado (Mediterranean spider crab)).